The sequence spans 341 residues: Putative ubiquitin-like-specific protease 1B (341 aa).

Active-site residues include His231, Asp248, and Cys300.

It belongs to the peptidase C48 family.

Functionally, protease that catalyzes two essential functions in the SUMO pathway: processing of full-length SUMOs to their mature forms and deconjugation of SUMO from targeted proteins. This chain is Putative ubiquitin-like-specific protease 1B (ULP1B), found in Arabidopsis thaliana (Mouse-ear cress).